The chain runs to 273 residues: 3-keto-5-aminohexanoate cleavage enzyme (273 aa).

Residue E14 participates in (5S)-5-amino-3-oxohexanoate binding. Zn(2+) is bound by residues H46 and H48. 3 residues coordinate (5S)-5-amino-3-oxohexanoate: S82, G85, and S106. E227 is a binding site for Zn(2+).

Belongs to the BKACE family. Kce subfamily. In terms of assembly, homotetramer. It depends on Zn(2+) as a cofactor.

The catalysed reaction is (5S)-5-amino-3-oxohexanoate + acetyl-CoA = (3S)-3-aminobutanoyl-CoA + acetoacetate. It functions in the pathway amino-acid degradation; L-lysine degradation via acetate pathway. In terms of biological role, involved in the anaerobic fermentation of lysine. Catalyzes the reversible reaction between 3-keto-5-aminohexanoate (KAH) and acetyl-CoA to form 3-aminobutyryl-CoA and acetoacetate. The reaction involves the deprotonation of KAH, the nucleophilic addition onto acetyl-CoA and the intramolecular transfer of the CoA moiety. The polypeptide is 3-keto-5-aminohexanoate cleavage enzyme (Acetoanaerobium sticklandii (strain ATCC 12662 / DSM 519 / JCM 1433 / CCUG 9281 / NCIMB 10654 / HF) (Clostridium sticklandii)).